Reading from the N-terminus, the 553-residue chain is MEAGGDNAVPAPGGVEDLVDTQFPREEAGDSERVHASTLDPGDGDPEDTGSKDQPSSLLSPLPQTEAASSTCEHWETAAASDSSPPGEPESNSEGQGEDPDDGGDPSDEDWRSQRKHVFVLSEAGKPIYSRYGSVEALSATMGVMTALVSFVQSAGDAIRAIYAEDHKLVFLQQGPLLLVAVSRTPQSAAQLRGELLAVHAQIVSTLTRASVARIFAHKQNYDLRRLLAGSERTLDRLLDSVEQDPGALLLGAVRCVPLARPLRDALGTLLRRCTAPGLALSVLAVGGRLITVAQERNVLAECRLDPADLQLLLDWVGAPAFAAGEAWAPVCLPRFNPDGFFYAYVARLDSMPVCLLLLGTNREAFHAMAACRRLVEDGMHNLGALRTLGEAANFSNGPAASAPAYSVQAVGAPGLRHFLYKPLDIPEQHRQLPQFTSPELEAPYSREEERQRLSDLYHRLHARLHSTSRPLRLIYHVAEKETLLAWVTSKFELYTCLSPLVTKAGAILVVTKLLRWVRKEEDRLFIRYPPKYSTPPSTSADQAPNNGLFTGL.

Position 1 is an N-acetylmethionine (Met1). Disordered regions lie at residues 1-111 (MEAG…DEDW) and 534-553 (STPP…FTGL). Residues 23-35 (FPREEAGDSERVH) show a composition bias toward basic and acidic residues. The span at 52–72 (KDQPSSLLSPLPQTEAASSTC) shows a compositional bias: polar residues. Residue Ser57 is modified to Phosphoserine. Low complexity predominate over residues 78–95 (AAASDSSPPGEPESNSEG). The span at 96–108 (QGEDPDDGGDPSD) shows a compositional bias: acidic residues. Residues 541–553 (ADQAPNNGLFTGL) show a composition bias toward polar residues.

It belongs to the MON1/SAND family. As to quaternary structure, interacts with CCNT2; down-regulates CCNT2-mediated activation of viral promoters during herpes simplex virus 1/HHV-1 infection. Found in a complex with RMC1, CCZ1 MON1A and MON1B.

The polypeptide is Vacuolar fusion protein MON1 homolog B (Mon1b) (Mus musculus (Mouse)).